An 89-amino-acid polypeptide reads, in one-letter code: Small ribosomal subunit protein uS15 (89 aa).

The protein belongs to the universal ribosomal protein uS15 family. In terms of assembly, part of the 30S ribosomal subunit. Forms a bridge to the 50S subunit in the 70S ribosome, contacting the 23S rRNA.

Its function is as follows. One of the primary rRNA binding proteins, it binds directly to 16S rRNA where it helps nucleate assembly of the platform of the 30S subunit by binding and bridging several RNA helices of the 16S rRNA. Functionally, forms an intersubunit bridge (bridge B4) with the 23S rRNA of the 50S subunit in the ribosome. This Chlorobaculum tepidum (strain ATCC 49652 / DSM 12025 / NBRC 103806 / TLS) (Chlorobium tepidum) protein is Small ribosomal subunit protein uS15.